The following is a 433-amino-acid chain: Bifunctional protein GlmU (433 aa).

The pyrophosphorylase stretch occupies residues 1–226; sequence MLSVIILAAG…EECFLGVNSQ (226 aa). UDP-N-acetyl-alpha-D-glucosamine is bound by residues 7–10, lysine 21, and 80–81; these read LAAG and GT. Residue aspartate 106 coordinates Mg(2+). Residues glycine 138, glutamate 152, asparagine 167, and asparagine 224 each contribute to the UDP-N-acetyl-alpha-D-glucosamine site. Asparagine 224 is a Mg(2+) binding site. The linker stretch occupies residues 227–247; it reads TERAKAEEIMLERLRKNAMDL. Residues 248 to 433 are N-acetyltransferase; it reads GVVMQLPNSI…NGYFKFFKKP (186 aa). The UDP-N-acetyl-alpha-D-glucosamine site is built by arginine 311 and lysine 328. The active-site Proton acceptor is histidine 339. Residues tyrosine 342 and asparagine 353 each contribute to the UDP-N-acetyl-alpha-D-glucosamine site. Acetyl-CoA-binding positions include alanine 356, 362–363, serine 381, serine 399, and arginine 416; that span reads NY.

The protein in the N-terminal section; belongs to the N-acetylglucosamine-1-phosphate uridyltransferase family. This sequence in the C-terminal section; belongs to the transferase hexapeptide repeat family. In terms of assembly, homotrimer. It depends on Mg(2+) as a cofactor.

It is found in the cytoplasm. It catalyses the reaction alpha-D-glucosamine 1-phosphate + acetyl-CoA = N-acetyl-alpha-D-glucosamine 1-phosphate + CoA + H(+). It carries out the reaction N-acetyl-alpha-D-glucosamine 1-phosphate + UTP + H(+) = UDP-N-acetyl-alpha-D-glucosamine + diphosphate. It participates in nucleotide-sugar biosynthesis; UDP-N-acetyl-alpha-D-glucosamine biosynthesis; N-acetyl-alpha-D-glucosamine 1-phosphate from alpha-D-glucosamine 6-phosphate (route II): step 2/2. Its pathway is nucleotide-sugar biosynthesis; UDP-N-acetyl-alpha-D-glucosamine biosynthesis; UDP-N-acetyl-alpha-D-glucosamine from N-acetyl-alpha-D-glucosamine 1-phosphate: step 1/1. The protein operates within bacterial outer membrane biogenesis; LPS lipid A biosynthesis. Catalyzes the last two sequential reactions in the de novo biosynthetic pathway for UDP-N-acetylglucosamine (UDP-GlcNAc). The C-terminal domain catalyzes the transfer of acetyl group from acetyl coenzyme A to glucosamine-1-phosphate (GlcN-1-P) to produce N-acetylglucosamine-1-phosphate (GlcNAc-1-P), which is converted into UDP-GlcNAc by the transfer of uridine 5-monophosphate (from uridine 5-triphosphate), a reaction catalyzed by the N-terminal domain. The sequence is that of Bifunctional protein GlmU from Helicobacter pylori (strain ATCC 700392 / 26695) (Campylobacter pylori).